Reading from the N-terminus, the 390-residue chain is Sulfate adenylyltransferase (390 aa).

The protein belongs to the sulfate adenylyltransferase family.

It catalyses the reaction sulfate + ATP + H(+) = adenosine 5'-phosphosulfate + diphosphate. Its pathway is sulfur metabolism; hydrogen sulfide biosynthesis; sulfite from sulfate: step 1/3. In Synechocystis sp. (strain ATCC 27184 / PCC 6803 / Kazusa), this protein is Sulfate adenylyltransferase (sat).